The following is a 300-amino-acid chain: MKIGVIMGGISTEREVSLNSGREVIKYLELLEHEIIPIIIDKKEDVVEKVKGIDFAFLALHGEFGEDGTVQSVLQTLDIPYSGCGPLTSAICMDKDMTKKILKYANINTADWVNVSSVEDIDYEAIEKIGYPVFVKPNSGGSSVATNLVKDGDGIKEAVELALKYDKEVMIENYTKGEEITCCMLNGKMLPVLAIRPHAEFFDYTAKYADGGSDEVVIELEENLHKKVEEMALACWKELKCEVYVRVDMIVKAGVPYVLELNTLPGMTKNSLFPKSANAVGISFAELLNSIVKYSLEVER.

Residues 99–293 (KKILKYANIN…FAELLNSIVK (195 aa)) enclose the ATP-grasp domain. Position 126–181 (126–181 (IEKIGYPVFVKPNSGGSSVATNLVKDGDGIKEAVELALKYDKEVMIENYTKGEEIT)) interacts with ATP. Residues Asp248, Glu260, and Asn262 each coordinate Mg(2+).

The protein belongs to the D-alanine--D-alanine ligase family. Requires Mg(2+) as cofactor. The cofactor is Mn(2+).

The protein localises to the cytoplasm. It carries out the reaction 2 D-alanine + ATP = D-alanyl-D-alanine + ADP + phosphate + H(+). The protein operates within cell wall biogenesis; peptidoglycan biosynthesis. Functionally, cell wall formation. This chain is D-alanine--D-alanine ligase, found in Clostridium botulinum (strain 657 / Type Ba4).